A 659-amino-acid chain; its full sequence is Alpha-galactosidase D (659 aa).

The first 20 residues, 1–20 (MRALVPMVVAATALASPAPA), serve as a signal peptide directing secretion. N-linked (GlcNAc...) asparagine glycosylation is found at asparagine 48, asparagine 86, and asparagine 130. A disulfide bond links cysteine 125 and cysteine 158. Catalysis depends on aspartate 156, which acts as the Nucleophile. N-linked (GlcNAc...) asparagine glycosylation is present at asparagine 183. 201-205 (EWGID) is a substrate binding site. Catalysis depends on aspartate 223, which acts as the Proton donor. N-linked (GlcNAc...) asparagine glycans are attached at residues asparagine 438, asparagine 450, asparagine 484, asparagine 551, and asparagine 583.

Belongs to the glycosyl hydrolase 27 family.

The protein resides in the secreted. It carries out the reaction Hydrolysis of terminal, non-reducing alpha-D-galactose residues in alpha-D-galactosides, including galactose oligosaccharides, galactomannans and galactolipids.. Functionally, hydrolyzes a variety of simple alpha-D-galactoside as well as more complex molecules such as oligosaccharides and polysaccharides. Active on paranitrophenyl-alpha-galactoside but not on raffinose, locust bean gum and gum guar. In Emericella nidulans (strain FGSC A4 / ATCC 38163 / CBS 112.46 / NRRL 194 / M139) (Aspergillus nidulans), this protein is Alpha-galactosidase D (aglD).